The chain runs to 231 residues: Phosphoglycolate phosphatase (231 aa).

Catalysis depends on D9, which acts as the Nucleophile. Positions 9 and 11 each coordinate Mg(2+). K154 is a substrate binding site. Mg(2+) contacts are provided by D177 and D181.

It belongs to the archaeal SPP-like hydrolase family. Requires Mg(2+) as cofactor.

It carries out the reaction 2-phosphoglycolate + H2O = glycolate + phosphate. Its function is as follows. Catalyzes the dephosphorylation of 2-phosphoglycolate. The protein is Phosphoglycolate phosphatase of Pyrococcus furiosus (strain ATCC 43587 / DSM 3638 / JCM 8422 / Vc1).